A 664-amino-acid polypeptide reads, in one-letter code: uncharacterized protein (664 aa).

An N-terminal signal peptide occupies residues 1–35; the sequence is MGVSVLTFHVSLFLKRILSIAFFLLSLSTLLRIVN. Residues Asn-101 and Asn-138 are each glycosylated (N-linked (GlcNAc...) asparagine). Sel1-like repeat units lie at residues 141–178 and 179–214; these read AFANNMMGFFYSTSFSEYASNNPALARIHWELAAKQGS and LDAHQFLAYHNLIALNMPQSDEEAVKHYKFISDHLF. Asn-221, Asn-300, and Asn-371 each carry an N-linked (GlcNAc...) asparagine glycan. Sel1-like repeat units lie at residues 337 to 372, 373 to 409, 410 to 441, and 442 to 477; these read AQSCGYLGLLHLFDKGPLFDIDKAYWWFKRGATKND, SNSYYGLGYMAYHGLTSNGVDREKGMRLINLAVMNEN, PHALMFLGLIRLEEARYEEAYHLFLRAATQKS, and VISYKYLADCYYNGTGTSRSMISASLYYKKFVEAIR. N-linked (GlcNAc...) asparagine glycans are attached at residues Asn-454 and Asn-537. Sel1-like repeat units lie at residues 564–599 and 601–636; these read IDAIFKLGDYYYYGIGTPKDYSKAYTCYKIAYEQSS and GMGLWNMAYMHEYGIGRDQDIYIARRLLDELSSNQN.

Belongs to the sel-1 family.

This is an uncharacterized protein from Schizosaccharomyces pombe (strain 972 / ATCC 24843) (Fission yeast).